A 157-amino-acid polypeptide reads, in one-letter code: Polyferredoxin protein VhcB (157 aa).

4Fe-4S ferredoxin-type domains are found at residues 23 to 52 (NGISWDREKCEYCGPCAIKCPNDAIMVVNP), 62 to 92 (KTERANEFKMCDLCGTCVSACPTEALQMGKI), and 100 to 129 (DRIEFTPSLCDSCGACVEICPQNVLKLNEE). [4Fe-4S] cluster is bound by residues Cys32, Cys35, Cys38, Cys42, Cys72, Cys75, Cys78, Cys82, Cys109, Cys112, Cys115, Cys119, Cys136, Cys139, Cys142, and Cys146.

[4Fe-4S] cluster is required as a cofactor.

The chain is Polyferredoxin protein VhcB (vhcB) from Methanococcus voltae.